A 105-amino-acid polypeptide reads, in one-letter code: Nucleoid-associated protein RPE_4812 (105 aa).

Belongs to the YbaB/EbfC family. As to quaternary structure, homodimer.

The protein resides in the cytoplasm. Its subcellular location is the nucleoid. Its function is as follows. Binds to DNA and alters its conformation. May be involved in regulation of gene expression, nucleoid organization and DNA protection. This is Nucleoid-associated protein RPE_4812 from Rhodopseudomonas palustris (strain BisA53).